We begin with the raw amino-acid sequence, 648 residues long: RAF proto-oncogene serine/threonine-protein kinase (648 aa).

At serine 29 the chain carries Phosphoserine; by MAPK1. At serine 43 the chain carries Phosphoserine; by PKA and MAPK1. The RBD domain occupies 56–131 (NTIRVFLPNK…IGEELQVDFL (76 aa)). The segment at 138 to 184 (THNFARKTFLKLAFCDICQKFLLNGFRCQTCGYKFHEHCSTKVPTMC) adopts a Phorbol-ester/DAG-type zinc-finger fold. Zn(2+)-binding residues include histidine 139, cysteine 152, cysteine 155, cysteine 165, cysteine 168, histidine 173, cysteine 176, and cysteine 184. The tract at residues 220–334 (SVSRMPVSSQ…QEKNKIRPRG (115 aa)) is disordered. Residues 239 to 271 (TFNTSSPSSEGSLSQRQRSTSTPNVHMVSTTLP) are compositionally biased toward polar residues. Serine 252 bears the Phosphoserine mark. Residue serine 259 is modified to Phosphoserine; by PKA, PKC and PKB/AKT1. Threonine 268 carries the post-translational modification Phosphothreonine; by autocatalysis. A Phosphothreonine; by PKA modification is found at threonine 269. Positions 275-285 (RMIEDAIRSHS) are enriched in basic and acidic residues. The span at 286 to 301 (ESASPSALSSSPNNLS) shows a compositional bias: low complexity. Serine 289 carries the post-translational modification Phosphoserine; by MAPK1. Serine 296 is subject to Phosphoserine. Serine 301 carries the post-translational modification Phosphoserine; by MAPK1. Positions 331–349 (RPRGQRDSSYYWEIEASEV) are interaction with PEBP1/RKIP. At serine 338 the chain carries Phosphoserine; by PAK1, PAK2, PAK3 and PAK5. Serine 339 bears the Phosphoserine; by PAK1, PAK2 and PAK3 mark. Phosphotyrosine; by SRC occurs at positions 340 and 341. In terms of domain architecture, Protein kinase spans 349–609 (VMLSTRIGSG…PQILSSIELL (261 aa)). Residues 355–363 (IGSGSFGTV) and lysine 375 contribute to the ATP site. Catalysis depends on aspartate 468, which acts as the Proton acceptor. Serine 471 carries the phosphoserine modification. Position 491 is a phosphothreonine (threonine 491). Serine 494 is modified (phosphoserine). Serine 499 bears the Phosphoserine; by PKC mark. Symmetric dimethylarginine; by PRMT5 is present on arginine 563. Serine 621 is subject to Phosphoserine. Serine 642 is modified (phosphoserine; by MAPK1).

The protein belongs to the protein kinase superfamily. TKL Ser/Thr protein kinase family. RAF subfamily. As to quaternary structure, monomer. Homodimer. Heterodimerizes with BRAF and this heterodimer possesses a highly increased kinase activity compared to the respective homodimers or monomers. Heterodimerization is mitogen-regulated and enhanced by 14-3-3 proteins. MAPK1/ERK2 activation can induce a negative feedback that promotes the dissociation of the heterodimer. Forms a multiprotein complex with Ras (M-Ras/MRAS), SHOC2 and protein phosphatase 1 (PPP1CA, PPP1CB and PPP1CC). Interacts with LZTR1. Interacts with Ras proteins; the interaction is antagonized by RIN1. Weakly interacts with RIT1. Interacts (via N-terminus) with RGS14 (via RBD domains); the interaction mediates the formation of a ternary complex with BRAF, a ternary complex inhibited by GNAI1. Probably forms a complex composed of chaperones HSP90 and HSP70, co-chaperones CDC37, PPP5C, TSC1 and client protein TSC2, CDK4, AKT, RAF1 and NR3C1; this complex does not contain co-chaperones STIP1/HOP and PTGES3/p23. Interacts with STK3/MST2; the interaction inhibits its pro-apoptotic activity. Interacts (when phosphorylated at Ser-259) with YWHAZ (unphosphorylated at 'Thr-232'). Interacts with MAP2K1/MEK1 and MAP2K2/MEK2. Interacts with MAP3K5/ASF1 (via N-terminus) and this interaction inhibits the proapoptotic function of MAP3K5/ASK1. Interacts with PAK1 (via kinase domain). The phosphorylated form interacts with PIN1. The Ser-338 and Ser-339 phosphorylated form (by PAK1) interacts with BCL2. Interacts with PEBP1/RKIP and this interaction is enhanced if RAF1 is phosphorylated on residues Ser-338, Ser-339, Tyr-340 and Tyr-341. Interacts with ADCY2, ADCY5, ADCY6, DGKH, RCAN1/DSCR1, PPP1R12A, PKB/AKT1, PPP2CA, PPP2R1B, SPRY2, SPRY4, CNKSR1/CNK1, KSR2 and PHB/prohibitin. Interacts with ROCK2. In its active form, interacts with PRMT5. Interacts with FAM83B; displaces 14-3-3 proteins from RAF1 and activates RAF1. Interacts with PDE8A; the interaction promotes RAF1 activity. Interacts with MFHAS1. Interacts with GLS. Interacts with NEK10 and MAP2K1; the interaction is direct with NEK10 and required for ERK1/2-signaling pathway activation in response to UV irradiation. The cofactor is Zn(2+). In terms of processing, phosphorylation at Thr-269, Ser-338, Tyr-341, Thr-491 and Ser-494 results in its activation. Phosphorylation at Ser-29, Ser-43, Ser-289, Ser-296, Ser-301 and Ser-642 by MAPK1/ERK2 results in its inactivation. Phosphorylation at Ser-259 induces the interaction with YWHAZ and inactivates kinase activity. Dephosphorylation of Ser-259 by the SHOC2-MRAS-PP1c (SMP) complex consisting of SHOC2, GTP-bound M-Ras/MRAS and the catalytic subunit of protein phosphatase 1 (PPP1CA, PPP1CB or PPP1CC); this relieves inactivation and stimulates kinase activity. Phosphorylation at Ser-338 by PAK1 and PAK5 and Ser-339 by PAK1 is required for its mitochondrial localization. Phosphorylation at Ser-621 in response to growth factor treatment stabilizes the protein, possibly by preventing proteasomal degradation. Phosphorylation at Ser-289, Ser-296, Ser-301, Ser-338 and Ser-621 are somehow linked to the methylation potential of cells. Treatment of cells with HGF in the presence of the methylation inhibitor 5'-methylthioadenosine (MTA) results in increased phosphorylation at Ser-338 and Ser-621 and decreased phosphorylation at Ser-296, Ser-301 and Ser-338. Dephosphorylation at Ser-338 by PPP5C results in an activity decrease. Methylated at Arg-563 in response to EGF treatment. This modification leads to destabilization of the protein, possibly through proteasomal degradation. In terms of tissue distribution, in skeletal muscle, isoform 1 is more abundant than isoform 2.

The protein resides in the cytoplasm. It localises to the cell membrane. The protein localises to the mitochondrion. It is found in the nucleus. The enzyme catalyses L-seryl-[protein] + ATP = O-phospho-L-seryl-[protein] + ADP + H(+). It catalyses the reaction L-threonyl-[protein] + ATP = O-phospho-L-threonyl-[protein] + ADP + H(+). Its activity is regulated as follows. Regulation is a highly complex process involving membrane recruitment, protein-protein interactions, dimerization, and phosphorylation/dephosphorylation events. Ras-GTP recruits RAF1 to the membrane, thereby promoting its activation. The inactive conformation of RAF1 is maintained by autoinhibitory interactions occurring between the N-terminal regulatory and the C-terminal catalytic domains and by the binding of a 14-3-3 protein that contacts two phosphorylation sites, Ser-259 and Ser-621. Upon mitogenic stimulation, Ras and PPP2R1A cooperate to release autoinhibition and the subsequent phosphorylation of activating sites: Ser-338, Tyr-341, Thr-491, and Ser-494, yields a fully active kinase. Through a negative feedback mechanism involving MAPK1/ERK2, RAF1 is phosphorylated on Ser-29, Ser-43, Ser-289, Ser-296, Ser-301 and Ser-642 by MAPK1/ERK2, which yields an inactive, desensitized kinase. The signaling-competent conformation of RAF1 is finally re-established by the coordinated action of PIN1, a prolyl isomerase that converts pSer and pThr residues from the cis to the trans conformation, which is preferentially recognized and dephosphorylated by PPP2R1A. Activated by homodimerization and heterodimerization (with BRAF). Also regulated through association with other proteins such as KSR2, CNKSR1/CNK1, PEBP1/RKIP, PHB/prohibitin and SPRY4. PEBP1/RKIP acts by dissociating RAF1 from its substrates MAP2K1/MEK1 and MAP2K2/MEK2. PHB/prohibitin facilitates the displacement of 14-3-3 from RAF1 by activated Ras, thereby promoting cell membrane localization and phosphorylation of RAF1 at the activating Ser-338. SPRY4 inhibits Ras-independent, but not Ras-dependent, activation of RAF1. CNKSR1/CNK1 regulates Src-mediated RAF1 activation. Serine/threonine-protein kinase that acts as a regulatory link between the membrane-associated Ras GTPases and the MAPK/ERK cascade, and this critical regulatory link functions as a switch determining cell fate decisions including proliferation, differentiation, apoptosis, survival and oncogenic transformation. RAF1 activation initiates a mitogen-activated protein kinase (MAPK) cascade that comprises a sequential phosphorylation of the dual-specific MAPK kinases (MAP2K1/MEK1 and MAP2K2/MEK2) and the extracellular signal-regulated kinases (MAPK3/ERK1 and MAPK1/ERK2). The phosphorylated form of RAF1 (on residues Ser-338 and Ser-339, by PAK1) phosphorylates BAD/Bcl2-antagonist of cell death at 'Ser-75'. Phosphorylates adenylyl cyclases: ADCY2, ADCY5 and ADCY6, resulting in their activation. Phosphorylates PPP1R12A resulting in inhibition of the phosphatase activity. Phosphorylates TNNT2/cardiac muscle troponin T. Can promote NF-kB activation and inhibit signal transducers involved in motility (ROCK2), apoptosis (MAP3K5/ASK1 and STK3/MST2), proliferation and angiogenesis (RB1). Can protect cells from apoptosis also by translocating to the mitochondria where it binds BCL2 and displaces BAD/Bcl2-antagonist of cell death. Regulates Rho signaling and migration, and is required for normal wound healing. Plays a role in the oncogenic transformation of epithelial cells via repression of the TJ protein, occludin (OCLN) by inducing the up-regulation of a transcriptional repressor SNAI2/SLUG, which induces down-regulation of OCLN. Restricts caspase activation in response to selected stimuli, notably Fas stimulation, pathogen-mediated macrophage apoptosis, and erythroid differentiation. The sequence is that of RAF proto-oncogene serine/threonine-protein kinase from Homo sapiens (Human).